A 269-amino-acid chain; its full sequence is Regulatory protein RecX (269 aa).

Belongs to the RecX family.

Its subcellular location is the cytoplasm. Functionally, modulates RecA activity. This Listeria monocytogenes serotype 4a (strain HCC23) protein is Regulatory protein RecX.